Here is a 385-residue protein sequence, read N- to C-terminus: Probable caffeine synthase 3 (385 aa).

S-adenosyl-L-homocysteine contacts are provided by tyrosine 18, cysteine 62, asparagine 67, aspartate 101, leucine 102, serine 140, and phenylalanine 141. Caffeine is bound by residues tyrosine 158, glutamine 161, and phenylalanine 162. Asparagine 179 lines the Mg(2+) pocket. Residue threonine 238 coordinates caffeine. Residues aspartate 261, phenylalanine 263, and asparagine 264 each contribute to the Mg(2+) site. Position 369 (tyrosine 369) interacts with caffeine.

Belongs to the methyltransferase superfamily. Type-7 methyltransferase family. Mg(2+) is required as a cofactor. As to expression, expressed in roots, stems, young and old leaves.

It functions in the pathway alkaloid biosynthesis. Its function is as follows. May be involved in the biosynthesis of caffeine. This chain is Probable caffeine synthase 3, found in Coffea arabica (Arabian coffee).